The chain runs to 355 residues: Tetraacyldisaccharide 4'-kinase (355 aa).

49-56 (SAGGTGKT) lines the ATP pocket.

The protein belongs to the LpxK family.

The catalysed reaction is a lipid A disaccharide + ATP = a lipid IVA + ADP + H(+). The protein operates within glycolipid biosynthesis; lipid IV(A) biosynthesis; lipid IV(A) from (3R)-3-hydroxytetradecanoyl-[acyl-carrier-protein] and UDP-N-acetyl-alpha-D-glucosamine: step 6/6. Functionally, transfers the gamma-phosphate of ATP to the 4'-position of a tetraacyldisaccharide 1-phosphate intermediate (termed DS-1-P) to form tetraacyldisaccharide 1,4'-bis-phosphate (lipid IVA). The polypeptide is Tetraacyldisaccharide 4'-kinase (Chlorobium phaeobacteroides (strain DSM 266 / SMG 266 / 2430)).